The primary structure comprises 580 residues: Lysine--tRNA ligase (580 aa).

The 'HIGH' region motif lies at 43–51 (PSGPIHLGN). The interval 178–209 (KAPAKKSQKPLDEAELEAAEGSGAAAEDDGSS) is disordered. Residues 196-209 (AEGSGAAAEDDGSS) show a composition bias toward low complexity. A 'KMSKS' region motif is present at residues 325-329 (KMSSS).

This sequence belongs to the class-I aminoacyl-tRNA synthetase family.

It localises to the cytoplasm. The catalysed reaction is tRNA(Lys) + L-lysine + ATP = L-lysyl-tRNA(Lys) + AMP + diphosphate. The polypeptide is Lysine--tRNA ligase (lysS) (Streptomyces coelicolor (strain ATCC BAA-471 / A3(2) / M145)).